The chain runs to 89 residues: HssA/B-like protein DDB_G0295685 (89 aa).

The protein belongs to the hssA/B family.

The sequence is that of HssA/B-like protein DDB_G0295685 from Dictyostelium discoideum (Social amoeba).